Consider the following 343-residue polypeptide: tRNA N6-adenosine threonylcarbamoyltransferase (343 aa).

Residues H111 and H115 each contribute to the Fe cation site. Residues 135-139, D168, G181, and N280 contribute to the substrate site; that span reads VLSGG. D306 contacts Fe cation.

It belongs to the KAE1 / TsaD family. The cofactor is Fe(2+).

The protein resides in the cytoplasm. It catalyses the reaction L-threonylcarbamoyladenylate + adenosine(37) in tRNA = N(6)-L-threonylcarbamoyladenosine(37) in tRNA + AMP + H(+). Required for the formation of a threonylcarbamoyl group on adenosine at position 37 (t(6)A37) in tRNAs that read codons beginning with adenine. Is involved in the transfer of the threonylcarbamoyl moiety of threonylcarbamoyl-AMP (TC-AMP) to the N6 group of A37, together with TsaE and TsaB. TsaD likely plays a direct catalytic role in this reaction. In Protochlamydia amoebophila (strain UWE25), this protein is tRNA N6-adenosine threonylcarbamoyltransferase.